The following is a 128-amino-acid chain: Large-conductance mechanosensitive channel (128 aa).

Transmembrane regions (helical) follow at residues 10–30 and 76–96; these read FAMRGNVVDMAIGVIIGSAFG and GLFIQNVIDFIIIAFAIFMMI.

The protein belongs to the MscL family. In terms of assembly, homopentamer.

Its subcellular location is the cell inner membrane. Functionally, channel that opens in response to stretch forces in the membrane lipid bilayer. May participate in the regulation of osmotic pressure changes within the cell. This is Large-conductance mechanosensitive channel from Haemophilus influenzae (strain 86-028NP).